The chain runs to 885 residues: MNSREIRQSFLDFFAGKEHRIVRSAPVIPAEDPTLLFTNAGMNQFKDVFLGKGTREYTRAADTQKCIRASGKHNDLEDVGRDTYHHTFFEMLGNWSFGDYYKKEAIGWAWELMTEVWKLPKERLYATVYHDDEESFKLWQSETDIEHSHILKFGDKDNFWEMGETGPCGPCSEIHIDLTPDGSGGPLVNVGDHRVIELWNLVFIQYDRQADGTLVPLPQKHVDTGMGFERVAAVLQGKSSNYDSDVFAPLFDRITELTGTVYTASLDSPSDIAMRVIADHCRTLTFALSDGAMPGNEGRGYVLRRILRRAVRYAGTLGCHEPIIYKMVEVLVRTMGDVFPELEKQQATVEKIIRAEEESFLVTLGRGTEIFNEVVADMKTAGSTTISGADAFKLYDTFGFPLDLTRLMAAEVGLGIDEAGFEHCMMEQKTRARMDRKGKMQMQDDGGEWQWFAPEAPTTFVGYDMLETEATLVAARVSGDKLLMVLDQTPFYAESGGQVGDHGTLETAGYRLDVTDTRKDGEQIVHVVTSAHDKVRDCAVTPADVSFDGVVSVKAAVDRDRRVATERNHTATHLLHAALRKVLGEHVQQKGSLVTPERLRFDFSHFSKVSAEELEQVEHEVNAEIRKAASVTKHADVPYEEALALGALAFFGDKYADRVRVVEVPGISIELCGGTHVGNIGQIGMVKIVSESSVAAGIRRIEAVTGAAAEALLWQEYRDLQEIKNLLKLKADEEAGPKIKELLEEKKALDKQLQESRLAGLLDRLAASLAGGEEVNGCRIMTERLDGVSGDELRQAAVALRERVPCAVGLLCGVADGKVSLVAFASDEAVKSLKLDAGKLVKEAAASVKGGGGGKLELATAGGKEPAGIDKAIEVFVASVKSALQ.

4 residues coordinate Zn(2+): His-569, His-573, Cys-672, and His-676.

This sequence belongs to the class-II aminoacyl-tRNA synthetase family. Zn(2+) serves as cofactor.

The protein localises to the cytoplasm. The enzyme catalyses tRNA(Ala) + L-alanine + ATP = L-alanyl-tRNA(Ala) + AMP + diphosphate. Its function is as follows. Catalyzes the attachment of alanine to tRNA(Ala) in a two-step reaction: alanine is first activated by ATP to form Ala-AMP and then transferred to the acceptor end of tRNA(Ala). Also edits incorrectly charged Ser-tRNA(Ala) and Gly-tRNA(Ala) via its editing domain. In Chlorobaculum tepidum (strain ATCC 49652 / DSM 12025 / NBRC 103806 / TLS) (Chlorobium tepidum), this protein is Alanine--tRNA ligase.